The following is a 76-amino-acid chain: Omega-scoloptoxin(15)-Ssd3c (76 aa).

The signal sequence occupies residues 1–23 (MEKKIIFLVVLVALLALPEFISS).

The protein belongs to the scoloptoxin-15 family. Contains 2 disulfide bonds. As to expression, expressed by the venom gland.

It is found in the secreted. In terms of biological role, voltage-gated calcium channel inhibitor (Cav) (8.6% block at 10 nM), when tested on DRG neurons. The polypeptide is Omega-scoloptoxin(15)-Ssd3c (Scolopendra dehaani (Thai centipede)).